We begin with the raw amino-acid sequence, 319 residues long: Protein-methionine-sulfoxide reductase catalytic subunit MsrP (319 aa).

The tat-type signal signal peptide spans 1–54; the sequence is MSSFKPSRFSTARLTGDAVTPKSIYLRRREFMIGLGAIAATGAASSAFADPLEA. Mo-molybdopterin is bound by residues Asn75, 78 to 79, Cys133, Asn218, Arg223, and 234 to 236; these read YE and GIK.

It belongs to the MsrP family. In terms of assembly, heterodimer of a catalytic subunit (MsrP) and a heme-binding subunit (MsrQ). Requires Mo-molybdopterin as cofactor. Post-translationally, predicted to be exported by the Tat system. The position of the signal peptide cleavage has not been experimentally proven.

It localises to the periplasm. It carries out the reaction L-methionyl-[protein] + a quinone + H2O = L-methionyl-(S)-S-oxide-[protein] + a quinol. It catalyses the reaction L-methionyl-[protein] + a quinone + H2O = L-methionyl-(R)-S-oxide-[protein] + a quinol. Part of the MsrPQ system that repairs oxidized periplasmic proteins containing methionine sulfoxide residues (Met-O), using respiratory chain electrons. Thus protects these proteins from oxidative-stress damage caused by reactive species of oxygen and chlorine generated by the host defense mechanisms. MsrPQ is essential for the maintenance of envelope integrity under bleach stress, rescuing a wide series of structurally unrelated periplasmic proteins from methionine oxidation. The catalytic subunit MsrP is non-stereospecific, being able to reduce both (R-) and (S-) diastereoisomers of methionine sulfoxide. The polypeptide is Protein-methionine-sulfoxide reductase catalytic subunit MsrP (Brucella melitensis biotype 1 (strain ATCC 23456 / CCUG 17765 / NCTC 10094 / 16M)).